The chain runs to 101 residues: Iron-sulfur cluster assembly protein CyaY (101 aa).

The protein belongs to the frataxin family.

Its function is as follows. Involved in iron-sulfur (Fe-S) cluster assembly. May act as a regulator of Fe-S biogenesis. The chain is Iron-sulfur cluster assembly protein CyaY from Rickettsia akari (strain Hartford).